The following is a 1066-amino-acid chain: MILEENKGMFALPGFDLIQYEGFKRFINQGLMEELLKFPKIQDADQEVEFLLVGDQYKLREPSIKEKDAVYKCVTYSSELYVPARLTQKRNRRIREQILFMGSIPLMTSQGTFIINGVTRVLVNQIVRSPGIFYSREPDHKRIPLYTGTIISNWGGRFKLEIDGRMRIWARISKERKFSIITLLLALGLTRKDILNGVCYPNILLDLWKRQDKDIKSSEDAIIELYKNLYCVSGDVTFSESIRKELQRKLFKQRFELGQIGRRNPNNKLNLNVPENESFLLPQDLLAAIDYLIGIKYGIGTLDDIDHLKNRRVRSVANFLQGQLRLALTHLENSIRQTMHKAIKRKRSLTPKGLVISTPLLTTFKEFFGSHPLSQFLDQTNPLAEMIHKRRLSTLGPGGLTRRTASFQVRDIHPSYYGRICPIETSEGINAGLITSLALHARVNDYGYLHSSFYNISDDEEHIVYLSPAEDEYYRIATGNQLASNWGTQEKQVTLARYRQEFLTIAWEQVHFRSLFPLQYFSIGASLIPFLEHNDANRALMGSHMQRQAVPLLKPEKCIVGTGLEGQVALDSGSVTRSTQEGQIVYVDGAKITLSLNDNETIDTELITYKRSNNKTCIKERPIISTGTYLKEGQLLADGTATVGGELAPGRNILVAYMPWEGYNFEDAILISERLISEDIFTSLHIERYEIEVRITNQGIEEITKDIPHLDSYVLRHLDSNGLVVLGSWVETGDVLVGKLTPQEDSLRAPEGKLLQAIFGIQVADTKESCLKVPIGGQGRVIDARWVYKENILINNAKTIHIYILQKRKIRVGDKVAGRHGNKGIVSKILPRQDMPHLQDGTPVDMILSPLGVPSRMNVGQIFECLLGLAGDFMQRHYRITPFDERFEREASRKLVFSELCEASEKTRNPWLFEPDYPGKSRLIDGRTGDTFEQPVTVGKAYMMKLIHQVDDKIHARSSGPYALITQQPLRGRSRRGGQRVGEMEVWALESFGAAYILQEMLTLKSDHIQARYKVLGAIVTGKPIPKPNSVPESFRLLVRELRSLALNLNYFLISEKDLEREMKNV.

The protein belongs to the RNA polymerase beta chain family. In plastids the minimal PEP RNA polymerase catalytic core is composed of four subunits: alpha, beta, beta', and beta''. When a (nuclear-encoded) sigma factor is associated with the core the holoenzyme is formed, which can initiate transcription.

Its subcellular location is the plastid. The protein resides in the chloroplast. It carries out the reaction RNA(n) + a ribonucleoside 5'-triphosphate = RNA(n+1) + diphosphate. In terms of biological role, DNA-dependent RNA polymerase catalyzes the transcription of DNA into RNA using the four ribonucleoside triphosphates as substrates. The chain is DNA-directed RNA polymerase subunit beta from Psilotum nudum (Whisk fern).